An 820-amino-acid chain; its full sequence is Leucine--tRNA ligase (820 aa).

The 'HIGH' region signature appears at 42-52 (PYPSGDLHMGH). The short motif at 576–580 (KMSKS) is the 'KMSKS' region element. K579 serves as a coordination point for ATP.

Belongs to the class-I aminoacyl-tRNA synthetase family.

Its subcellular location is the cytoplasm. The enzyme catalyses tRNA(Leu) + L-leucine + ATP = L-leucyl-tRNA(Leu) + AMP + diphosphate. The protein is Leucine--tRNA ligase of Coxiella burnetii (strain RSA 493 / Nine Mile phase I).